The sequence spans 120 residues: Xibalbin-1 (120 aa).

Residues 1–21 (MISKILIAACALLLISHLVLA) form the signal peptide. Residues 22 to 63 (VPYLEDGLNSLHNRTGESDETRGYTIQLLKEMPEDDAVEDYS) constitute a propeptide that is removed on maturation. Disulfide bonds link cysteine 79/cysteine 94, cysteine 86/cysteine 99, cysteine 93/cysteine 110, and cysteine 101/cysteine 108.

Belongs to the xibalbin-1 family. Expressed by the venom gland. Not found in the whole body.

It is found in the secreted. Probable neurotoxin. Strongly inhibits voltage-gated potassium channels (Kv1.1/KCNA1, Kv1.2/KCNA2, Kv1.3/KCNA3, and Kv1.6/KCNA6, with the highest toxicity against Kv1.6 (74% inhibition at 1 uM)) and mildly inhibits sodium channels (Nav1.2/SCN2A, Nav1.4/SCN4A, Nav1.5/SCN5A, Nav1.6/SCN8A, and BgNav). Induces activation of protein kinase A type II (PKA-II) and MAP kinase Erk1/2 in primary nociceptive and non-nociceptive sensory neurons. Does not show cytotoxic activity. Does not have an impact on Ca2+, cAMP, and NO signaling in the cell types analyzed. Does not interfere with the adhesion of leukocytes to endothelial cells. This Xibalbanus tulumensis (Blind cave remipede) protein is Xibalbin-1.